The primary structure comprises 374 residues: Anthranilate O-methyltransferase 2 (374 aa).

Tyr18 serves as a coordination point for S-adenosyl-L-homocysteine. Position 25 (Gln25) interacts with anthranilate. S-adenosyl-L-homocysteine is bound by residues Cys59, Asn64, Asp98, Leu99, Ser142, and Tyr143. Trp164 contributes to the anthranilate binding site. Positions 261 and 263 each coordinate Mg(2+).

The protein belongs to the methyltransferase superfamily. Type-7 methyltransferase family. SABATH subfamily.

It carries out the reaction anthranilate + S-adenosyl-L-methionine = O-methyl anthranilate + S-adenosyl-L-homocysteine. Functionally, methyltransferase involved in the biosynthesis of methyl anthranilate in response to stresses. Utilizes anthranilic acid as substrate. Produces exclusively the O-methyl ester. This Zea mays (Maize) protein is Anthranilate O-methyltransferase 2 (AAMT2).